Here is a 371-residue protein sequence, read N- to C-terminus: N-acetyldiaminopimelate deacetylase (371 aa).

Aspartate 68 is a catalytic residue. Glutamate 127 functions as the Proton acceptor in the catalytic mechanism.

This sequence belongs to the peptidase M20A family. N-acetyldiaminopimelate deacetylase subfamily.

The enzyme catalyses N-acetyl-(2S,6S)-2,6-diaminopimelate + H2O = (2S,6S)-2,6-diaminopimelate + acetate. The protein operates within amino-acid biosynthesis; L-lysine biosynthesis via DAP pathway; LL-2,6-diaminopimelate from (S)-tetrahydrodipicolinate (acetylase route): step 3/3. Functionally, catalyzes the conversion of N-acetyl-diaminopimelate to diaminopimelate and acetate. This Halalkalibacterium halodurans (strain ATCC BAA-125 / DSM 18197 / FERM 7344 / JCM 9153 / C-125) (Bacillus halodurans) protein is N-acetyldiaminopimelate deacetylase.